An 85-amino-acid chain; its full sequence is MAHKKAGGSSRNGRDSHSKRLGVKRYGGEIIRAGGIIVRQRGTQFHPGDNVGIGRDHTLFAKVDGKIVFAVKGRMNRRTVAVIPS.

The segment at 1–22 is disordered; that stretch reads MAHKKAGGSSRNGRDSHSKRLG.

It belongs to the bacterial ribosomal protein bL27 family.

The sequence is that of Large ribosomal subunit protein bL27 from Nitrosomonas europaea (strain ATCC 19718 / CIP 103999 / KCTC 2705 / NBRC 14298).